A 245-amino-acid chain; its full sequence is Orotidine 5'-phosphate decarboxylase (245 aa).

Residues aspartate 22, lysine 44, aspartate 71–threonine 80, threonine 131, arginine 192, glutamine 201, glycine 221, and arginine 222 each bind substrate. Residue lysine 73 is the Proton donor of the active site.

The protein belongs to the OMP decarboxylase family. Type 1 subfamily. As to quaternary structure, homodimer.

It catalyses the reaction orotidine 5'-phosphate + H(+) = UMP + CO2. The protein operates within pyrimidine metabolism; UMP biosynthesis via de novo pathway; UMP from orotate: step 2/2. In terms of biological role, catalyzes the decarboxylation of orotidine 5'-monophosphate (OMP) to uridine 5'-monophosphate (UMP). The sequence is that of Orotidine 5'-phosphate decarboxylase from Shigella dysenteriae serotype 1 (strain Sd197).